Reading from the N-terminus, the 415-residue chain is Adipocyte plasma membrane-associated protein (415 aa).

Residues 1 to 29 (MSEADGLRQRRPLRPQVVTDDGQVPEVKE) form a disordered region. An N-acetylserine modification is found at Ser-2. Over 2–39 (SEADGLRQRRPLRPQVVTDDGQVPEVKEGSSFSGRVFR) the chain is Cytoplasmic. At Thr-19 the chain carries Phosphothreonine. A helical; Signal-anchor for type II membrane protein transmembrane segment spans residues 40-60 (MTFLMLAVSLAIPLLGAMMLL). Topologically, residues 61-415 (ESPIDPQSFS…FICRLSLQSI (355 aa)) are extracellular. The N-linked (GlcNAc...) asparagine glycan is linked to Asn-159.

It belongs to the strictosidine synthase family. Post-translationally, glycosylated in vitro. As to expression, strongly expressed in adipose tissue. Highly expressed in liver, heart, and kidney. Expressed at intermediate level in brain and lung. Weakly expressed in spleen, skeletal muscle and testis.

The protein localises to the membrane. In terms of biological role, exhibits strong arylesterase activity with beta-naphthyl acetate and phenyl acetate. May play a role in adipocyte differentiation. The sequence is that of Adipocyte plasma membrane-associated protein (Apmap) from Mus musculus (Mouse).